A 248-amino-acid polypeptide reads, in one-letter code: UPF0246 protein RC0754 (248 aa).

This sequence belongs to the UPF0246 family.

This chain is UPF0246 protein RC0754, found in Rickettsia conorii (strain ATCC VR-613 / Malish 7).